A 286-amino-acid polypeptide reads, in one-letter code: MPRMKDIPTKSSPGTDNSEKDEAVIEEDLSLNGQPFFTDNTDGGENEVSWTSSLLSTYVGCQPPAIPVCETVIDLTAPSQSGAPGDEHLPCSLNAETKFHIPDPSWTLSHTPPRGPHISQQLPTRRSKRRLHRKFEEERLCTKAKQGAGRPVPASVVKVGNITPHYGEELTRGDAVPAAPITPPYPRVQRPAQPTHVLFSPVFVSLKAEVCDQSHSPTRKQGRYGRVSSKAYTRQLQQALEEKDAQLCFLAARLEAHKEQIIFLRDMLMRMCQQPASPTDAPLPPC.

2 disordered regions span residues 1–22 and 106–130; these read MPRM…EKDE and WTLS…SKRR.

As to quaternary structure, interacts with host HDAC1 and HDAC2, these interactions suppress HDAC activities. Interacts with protein ORF57. Interacts with protein vPK. In terms of processing, sumoylated.

The protein operates within protein modification; protein sumoylation. Functionally, SUMO E3 ligase that plays a role in viral gene regulation and is essential for viral reactivation. Disrupts host G1 cell cycle control thus allowing viral transcription and translation to proceed at the early stages of infection. Catalyzes its own SUMO modification as well as that of its interacting partners such as host TP53 and RB1. Regulates viral gene expression and reactivation and may mediate the SUMOylation of viral promoters in the low methylated 'Lys-9' histone H3 (H3K9me) region which results in a diminution of viral gene expression after reactivation. SUMOylates also host histone lysine demethylase 4A/KDM4A, an essential step for complete enrichment of SUMO-2/3 on the viral genome during viral transactivation and reactivation. The protein is E3 SUMO-protein ligase K-bZIP (K8) of Human herpesvirus 8 type P (isolate GK18) (HHV-8).